Reading from the N-terminus, the 548-residue chain is CTP synthase (548 aa).

The interval 1–270 (MNRRSCAFIF…DTKISALLGC (270 aa)) is amidoligase domain. A CTP-binding site is contributed by S17. UTP is bound at residue S17. ATP-binding positions include 18–23 (SIGKGL) and D75. 2 residues coordinate Mg(2+): D75 and E143. CTP-binding positions include 150–152 (DIE), 190–195 (KTKPSQ), and K227. UTP contacts are provided by residues 190-195 (KTKPSQ) and K227. Positions 305–548 (YSGLCDAYIS…VRAGLLRKYS (244 aa)) constitute a Glutamine amidotransferase type-1 domain. G356 is an L-glutamine binding site. C383 serves as the catalytic Nucleophile; for glutamine hydrolysis. L-glutamine contacts are provided by residues 384 to 387 (FGFQ), E407, and R475. Active-site residues include H521 and E523.

The protein belongs to the CTP synthase family. As to quaternary structure, homotetramer.

It catalyses the reaction UTP + L-glutamine + ATP + H2O = CTP + L-glutamate + ADP + phosphate + 2 H(+). It carries out the reaction L-glutamine + H2O = L-glutamate + NH4(+). The enzyme catalyses UTP + NH4(+) + ATP = CTP + ADP + phosphate + 2 H(+). It functions in the pathway pyrimidine metabolism; CTP biosynthesis via de novo pathway; CTP from UDP: step 2/2. With respect to regulation, allosterically activated by GTP, when glutamine is the substrate; GTP has no effect on the reaction when ammonia is the substrate. The allosteric effector GTP functions by stabilizing the protein conformation that binds the tetrahedral intermediate(s) formed during glutamine hydrolysis. Inhibited by the product CTP, via allosteric rather than competitive inhibition. Its function is as follows. Catalyzes the ATP-dependent amination of UTP to CTP with either L-glutamine or ammonia as the source of nitrogen. Regulates intracellular CTP levels through interactions with the four ribonucleotide triphosphates. The chain is CTP synthase from Neorickettsia sennetsu (strain ATCC VR-367 / Miyayama) (Ehrlichia sennetsu).